The following is a 396-amino-acid chain: Probable sugar efflux transporter (396 aa).

12 helical membrane-spanning segments follow: residues Val-15–Met-35, Gly-51–Ala-71, Leu-84–Leu-104, Met-109–Ile-129, Gln-137–Gly-157, Val-168–Leu-188, Pro-209–Tyr-229, Asn-245–Phe-265, Pro-273–Phe-293, Thr-297–Leu-317, Val-333–Gly-353, and Ile-365–Leu-385.

This sequence belongs to the major facilitator superfamily. SotB (TC 2.A.1.2) family.

The protein localises to the cell inner membrane. Involved in the efflux of sugars. The physiological role may be the reduction of the intracellular concentration of toxic sugars or sugar metabolites. This chain is Probable sugar efflux transporter, found in Haemophilus influenzae (strain ATCC 51907 / DSM 11121 / KW20 / Rd).